Reading from the N-terminus, the 239-residue chain is Ribonuclease 3 (239 aa).

The region spanning 12-137 is the RNase III domain; the sequence is RARLETAIGY…LIAAIYLDGG (126 aa). Residue Glu-50 coordinates Mg(2+). Asp-54 is an active-site residue. Residues Asp-123 and Glu-126 each contribute to the Mg(2+) site. Residue Glu-126 is part of the active site. Residues 162–231 enclose the DRBM domain; the sequence is DAKTELQEWA…AMRLLEREGV (70 aa).

Belongs to the ribonuclease III family. Homodimer. Mg(2+) serves as cofactor.

It localises to the cytoplasm. It carries out the reaction Endonucleolytic cleavage to 5'-phosphomonoester.. In terms of biological role, digests double-stranded RNA. Involved in the processing of primary rRNA transcript to yield the immediate precursors to the large and small rRNAs (23S and 16S). Processes some mRNAs, and tRNAs when they are encoded in the rRNA operon. Processes pre-crRNA and tracrRNA of type II CRISPR loci if present in the organism. This Sinorhizobium fredii (strain NBRC 101917 / NGR234) protein is Ribonuclease 3.